The following is a 214-amino-acid chain: Cytochrome b (214 aa).

4 consecutive transmembrane segments (helical) span residues 31–51 (FGSM…FLAI), 75–96 (WIMQ…YIHI), 111–131 (WLSG…GYVL), and 176–196 (FFAL…IHII). Histidine 81 and histidine 95 together coordinate heme b. Residues histidine 180 and histidine 194 each coordinate heme b. Residue histidine 199 participates in a ubiquinone binding.

It belongs to the cytochrome b family. In terms of assembly, the cytochrome bc1 complex contains 3 respiratory subunits (MT-CYB, CYC1 and UQCRFS1), 2 core proteins (UQCRC1 and UQCRC2) and probably 6 low-molecular weight proteins. Heme b is required as a cofactor.

The protein resides in the mitochondrion inner membrane. Functionally, component of the ubiquinol-cytochrome c reductase complex (complex III or cytochrome b-c1 complex) that is part of the mitochondrial respiratory chain. The b-c1 complex mediates electron transfer from ubiquinol to cytochrome c. Contributes to the generation of a proton gradient across the mitochondrial membrane that is then used for ATP synthesis. In Atractaspis micropholis (Mole viper), this protein is Cytochrome b (MT-CYB).